The following is a 449-amino-acid chain: UDP-N-acetylglucosamine 1-carboxyvinyltransferase (449 aa).

Positions 1 to 12 (MQVTVNEHDAVE) are enriched in basic and acidic residues. Residues 1–30 (MQVTVNEHDAVERVATATPAGNREAHAHGT) form a disordered region. Position 51–52 (51–52 (KN)) interacts with phosphoenolpyruvate. Residue arginine 121 participates in UDP-N-acetyl-alpha-D-glucosamine binding. The Proton donor role is filled by cysteine 145. A 2-(S-cysteinyl)pyruvic acid O-phosphothioketal modification is found at cysteine 145. Residues 150 to 154 (RPVDQ), aspartate 333, and isoleucine 355 each bind UDP-N-acetyl-alpha-D-glucosamine.

It belongs to the EPSP synthase family. MurA subfamily.

It is found in the cytoplasm. The enzyme catalyses phosphoenolpyruvate + UDP-N-acetyl-alpha-D-glucosamine = UDP-N-acetyl-3-O-(1-carboxyvinyl)-alpha-D-glucosamine + phosphate. The protein operates within cell wall biogenesis; peptidoglycan biosynthesis. Functionally, cell wall formation. Adds enolpyruvyl to UDP-N-acetylglucosamine. The protein is UDP-N-acetylglucosamine 1-carboxyvinyltransferase of Burkholderia pseudomallei (strain 1710b).